The chain runs to 201 residues: dTTP/UTP pyrophosphatase (201 aa).

Asp-79 serves as the catalytic Proton acceptor.

This sequence belongs to the Maf family. YhdE subfamily. Requires a divalent metal cation as cofactor.

It localises to the cytoplasm. It catalyses the reaction dTTP + H2O = dTMP + diphosphate + H(+). The catalysed reaction is UTP + H2O = UMP + diphosphate + H(+). Functionally, nucleoside triphosphate pyrophosphatase that hydrolyzes dTTP and UTP. May have a dual role in cell division arrest and in preventing the incorporation of modified nucleotides into cellular nucleic acids. The polypeptide is dTTP/UTP pyrophosphatase (Hahella chejuensis (strain KCTC 2396)).